The sequence spans 280 residues: Energy-coupling factor transporter ATP-binding protein EcfA2 (280 aa).

Residues 3 to 245 (INLQNVSYTY…VSLLEKKQLG (243 aa)) enclose the ABC transporter domain. 40–47 (GHTGSGKS) provides a ligand contact to ATP.

This sequence belongs to the ABC transporter superfamily. Energy-coupling factor EcfA family. As to quaternary structure, forms a stable energy-coupling factor (ECF) transporter complex composed of 2 membrane-embedded substrate-binding proteins (S component), 2 ATP-binding proteins (A component) and 2 transmembrane proteins (T component).

It localises to the cell membrane. In terms of biological role, ATP-binding (A) component of a common energy-coupling factor (ECF) ABC-transporter complex. Unlike classic ABC transporters this ECF transporter provides the energy necessary to transport a number of different substrates. This Streptococcus pyogenes serotype M1 protein is Energy-coupling factor transporter ATP-binding protein EcfA2.